The following is a 106-amino-acid chain: Halilectin 3, beta chain (106 aa).

Residue asparagine 65 is glycosylated (N-linked (GlcNAc...) asparagine).

In terms of assembly, probable heterotrimer consisting of an alpha chain and two beta chains. The alpha chain can probably have different glycosylation states. Post-translationally, glycosylated.

In terms of biological role, lectin with affinity for N-acetyl-galactosamine, carragenan and glycoprotein porcine stomach mucin (PSM). Has metal-independent hemagglutinating activity towards erythrocytes from rabbit and human. Hemagglutinating activity is not inhibited by D-galactose, D-glucose, D-mannose, D-fucose, methyl-alpha-D-galactopyranoside, methyl-alpha-D-glucopyranoside, N-acetyl-glucosamine, N-acetyl-mannosamine, D-fructose, alpha-D-lactose, beta-D-lactose, D-lactulose, D-sucrose, fucoidan or glycoproteins thyroglobulin and ovalmucoid. In Haliclona caerulea (Blue Caribbean sponge), this protein is Halilectin 3, beta chain.